Consider the following 488-residue polypeptide: Ribulose bisphosphate carboxylase large chain (488 aa).

The substrate site is built by Asn127 and Thr177. The Proton acceptor role is filled by Lys179. Lys181 is a substrate binding site. Mg(2+) contacts are provided by Lys205, Asp207, and Glu208. Position 205 is an N6-carboxylysine (Lys205). His297 acts as the Proton acceptor in catalysis. The substrate site is built by Arg298, His330, and Ser382.

The protein belongs to the RuBisCO large chain family. Type I subfamily. As to quaternary structure, heterohexadecamer of 8 large chains and 8 small chains. Mg(2+) is required as a cofactor.

Its subcellular location is the plastid. It localises to the chloroplast. It catalyses the reaction 2 (2R)-3-phosphoglycerate + 2 H(+) = D-ribulose 1,5-bisphosphate + CO2 + H2O. The catalysed reaction is D-ribulose 1,5-bisphosphate + O2 = 2-phosphoglycolate + (2R)-3-phosphoglycerate + 2 H(+). In terms of biological role, ruBisCO catalyzes two reactions: the carboxylation of D-ribulose 1,5-bisphosphate, the primary event in carbon dioxide fixation, as well as the oxidative fragmentation of the pentose substrate in the photorespiration process. Both reactions occur simultaneously and in competition at the same active site. The chain is Ribulose bisphosphate carboxylase large chain from Chrysotila carterae (Marine alga).